A 288-amino-acid chain; its full sequence is Protease HtpX homolog (288 aa).

The next 2 membrane-spanning stretches (helical) occupy residues 1–21 (MHTI…LLAG) and 23–43 (IIGG…MNFF). His130 is a Zn(2+) binding site. Residue Glu131 is part of the active site. His134 contacts Zn(2+). 2 consecutive transmembrane segments (helical) span residues 140-160 (ILIS…AEMA) and 175-195 (IGGL…AMII). Glu204 lines the Zn(2+) pocket.

This sequence belongs to the peptidase M48B family. Requires Zn(2+) as cofactor.

The protein localises to the cell inner membrane. The chain is Protease HtpX homolog from Persephonella marina (strain DSM 14350 / EX-H1).